The following is a 388-amino-acid chain: Protein TsgA homolog (388 aa).

A run of 12 helical transmembrane segments spans residues 11 to 31 (WISF…GMIM), 50 to 70 (TFLN…IEII), 77 to 97 (IFSF…NSIF), 101 to 121 (INMF…TFII), 133 to 153 (LLLL…IVTA), 160 to 180 (IIWY…FLLT), 206 to 226 (VFLL…FISW), 244 to 264 (SLVS…SFII), 268 to 288 (NLYR…YCFI), 298 to 318 (YIII…ITLA), 332 to 352 (LILL…SPIV), and 360 to 380 (TLIS…LIYF).

It belongs to the major facilitator superfamily. TsgA family.

The protein resides in the cell membrane. The sequence is that of Protein TsgA homolog from Buchnera aphidicola subsp. Acyrthosiphon pisum (strain Tuc7).